Consider the following 252-residue polypeptide: Zinc finger protein 511 (252 aa).

C2H2-type zinc fingers lie at residues 80–105 (FACQ…HTLH), 107–130 (NVCS…LEWH), and 144–169 (YQCL…VRMH). Positions 177–221 (FDKPKKSRSPASAEAPGDSGERSEGEAMEICSEPVAASPAPAGER) are disordered. At arginine 240 the chain carries Omega-N-methylarginine.

This sequence belongs to the krueppel C2H2-type zinc-finger protein family.

It localises to the nucleus. May be involved in transcriptional regulation. The protein is Zinc finger protein 511 of Homo sapiens (Human).